The primary structure comprises 153 residues: Flagellar assembly factor FliW (153 aa).

The protein belongs to the FliW family. Interacts with translational regulator CsrA and flagellin(s).

It is found in the cytoplasm. Functionally, acts as an anti-CsrA protein, binds CsrA and prevents it from repressing translation of its target genes, one of which is flagellin. Binds to flagellin and participates in the assembly of the flagellum. This is Flagellar assembly factor FliW from Heliobacterium modesticaldum (strain ATCC 51547 / Ice1).